Here is an 817-residue protein sequence, read N- to C-terminus: LisH domain-containing protein ARMC9 (817 aa).

The 33-residue stretch at 7 to 39 folds into the LisH domain; the sequence is HESELLGLVKEYLDFAEFEDTLKTFSKECKVKG. Residues 204 to 230 adopt a coiled-coil conformation; sequence GPNSKELLQQLHQQLVEAERRAMTYLK. The residue at position 583 (S583) is a Phosphoserine. Disordered regions lie at residues 637 to 659 and 761 to 817; these read RKGP…TPGG and CKPQ…SIRK. Residues 765–774 show a composition bias toward polar residues; sequence VPSTPETVEQ. Over residues 793–807 the composition is skewed to low complexity; sequence PQQASRPASTASSTR. Polar residues predominate over residues 808–817; the sequence is GLHSSQSIRK.

As to quaternary structure, interacts with TOGARAM1, CCDC66, CEP104, CSPP1 and CEP290. Interacts with NDUFAF2.

The protein resides in the cytoplasm. The protein localises to the cytoskeleton. It localises to the cilium basal body. It is found in the cell projection. Its subcellular location is the cilium. The protein resides in the microtubule organizing center. The protein localises to the centrosome. It localises to the centriole. Its function is as follows. Involved in ciliogenesis. It is required for appropriate acetylation and polyglutamylation of ciliary microtubules, and regulation of cilium length. Acts as a positive regulator of hedgehog (Hh) signaling. May participate in the trafficking and/or retention of GLI2 and GLI3 proteins at the ciliary tip. The chain is LisH domain-containing protein ARMC9 from Mus musculus (Mouse).